A 217-amino-acid polypeptide reads, in one-letter code: Probable GTP-binding protein EngB (217 aa).

Positions 44-217 (DRVEVCFAGR…TLRSIIAHLE (174 aa)) constitute an EngB-type G domain. GTP is bound by residues 52-59 (GRSNVGKS), 79-83 (GRTQE), 97-100 (DLPG), 164-167 (TKAD), and 198-200 (TSS). Ser-59 and Thr-81 together coordinate Mg(2+).

The protein belongs to the TRAFAC class TrmE-Era-EngA-EngB-Septin-like GTPase superfamily. EngB GTPase family. The cofactor is Mg(2+).

Necessary for normal cell division and for the maintenance of normal septation. This is Probable GTP-binding protein EngB from Ruegeria pomeroyi (strain ATCC 700808 / DSM 15171 / DSS-3) (Silicibacter pomeroyi).